The following is a 29-amino-acid chain: Cyclotide mech-3 (29 aa).

A cross-link (cyclopeptide (Gly-Asn)) is located at residues 1-29 (GLPTCGETCTLGKCNTPKCTCNWPICYKN). 3 cysteine pairs are disulfide-bonded: Cys5/Cys19, Cys9/Cys21, and Cys14/Cys26.

This is a cyclic peptide. Post-translationally, contains 3 disulfide bonds.

Functionally, probably participates in a plant defense mechanism (Potential). Binds to and induces leakage in phospholipd membranes, particularly ones containing 1-palmitoyl-2-oleophosphatidylethanolamine (POPE). In vitro, displays cytotoxicity against cultured cells but no hemolytic activity towards fresh erythrocytes. The sequence is that of Cyclotide mech-3 from Melicytus chathamicus (Chatham Island mahoe).